The following is a 120-amino-acid chain: Aspartate 1-decarboxylase (120 aa).

The active-site Schiff-base intermediate with substrate; via pyruvic acid is S25. The residue at position 25 (S25) is a Pyruvic acid (Ser). Residue T57 participates in substrate binding. Y58 acts as the Proton donor in catalysis. Residue 73 to 75 participates in substrate binding; the sequence is GAA.

Belongs to the PanD family. As to quaternary structure, heterooctamer of four alpha and four beta subunits. Requires pyruvate as cofactor. Is synthesized initially as an inactive proenzyme, which is activated by self-cleavage at a specific serine bond to produce a beta-subunit with a hydroxyl group at its C-terminus and an alpha-subunit with a pyruvoyl group at its N-terminus.

Its subcellular location is the cytoplasm. It carries out the reaction L-aspartate + H(+) = beta-alanine + CO2. It functions in the pathway cofactor biosynthesis; (R)-pantothenate biosynthesis; beta-alanine from L-aspartate: step 1/1. Functionally, catalyzes the pyruvoyl-dependent decarboxylation of aspartate to produce beta-alanine. The polypeptide is Aspartate 1-decarboxylase (Ralstonia nicotianae (strain ATCC BAA-1114 / GMI1000) (Ralstonia solanacearum)).